A 401-amino-acid polypeptide reads, in one-letter code: Argininosuccinate synthase (401 aa).

Residues alanine 10–serine 18 and alanine 38 contribute to the ATP site. Residue tyrosine 89 participates in L-citrulline binding. Glycine 119 is an ATP binding site. Residues threonine 121, asparagine 125, and aspartate 126 each contribute to the L-aspartate site. Asparagine 125 lines the L-citrulline pocket. L-citrulline contacts are provided by arginine 129, serine 177, serine 186, glutamate 262, and tyrosine 274.

This sequence belongs to the argininosuccinate synthase family. Type 1 subfamily. As to quaternary structure, homotetramer.

It is found in the cytoplasm. The catalysed reaction is L-citrulline + L-aspartate + ATP = 2-(N(omega)-L-arginino)succinate + AMP + diphosphate + H(+). It functions in the pathway amino-acid biosynthesis; L-arginine biosynthesis; L-arginine from L-ornithine and carbamoyl phosphate: step 2/3. This is Argininosuccinate synthase from Prochlorococcus marinus (strain MIT 9313).